The primary structure comprises 2669 residues: Nucleosome-remodeling factor subunit NURF301 (2669 aa).

Over residues 1–12 the composition is skewed to basic residues; the sequence is MSGRGSRKRGRP. A required for function in nucleosome sliding region spans residues 1-121; sequence MSGRGSRKRG…EEDKSDNEDD (121 aa). The tract at residues 1-125 is disordered; the sequence is MSGRGSRKRG…SDNEDDMLLT (125 aa). The a.T hook DNA-binding region spans 6–18; sequence SRKRGRPPKTPNE. Polar residues predominate over residues 38–56; the sequence is GKSQPSTPSASRGISPQSD. 5 positions are modified to phosphoserine: Ser-40, Ser-52, Ser-55, Ser-59, and Ser-62. The segment covering 66–82 has biased composition (basic residues); that stretch reads HTNRSRGSAAKRGRGRK. The span at 109–125 shows a compositional bias: acidic residues; sequence GDSEEDKSDNEDDMLLT. Positions 188 to 248 constitute a DDT domain; that stretch reads NTHVLRALSI…LKAILREEDA (61 aa). The PHD-type 1 zinc-finger motif lies at 339–386; that stretch reads DDHCRVCHRLGDLLCCETCPAVYHLECVDPPMNDVPTEDWQCGLCRSH. The stretch at 460 to 515 forms a coiled coil; the sequence is RLHSQITERRDEIERQMKLTETLTNEHKHTKRSVIEIEQEAKNELLEKEVLDEDEK. The disordered stretch occupies residues 505–538; sequence LEKEVLDEDEKDGDAKSESQSIEGTKKQEECKMV. Positions 528-537 are enriched in basic and acidic residues; the sequence is GTKKQEECKM. Residues 688–720 are a coiled coil; that stretch reads LQRITSAEREERKKLEKREKRERDDEEERNRLA. 3 disordered regions span residues 1026–1048, 1135–1159, and 1406–1425; these read EGKR…AESE, TGLN…NQKS, and RSGL…EPQI. Ser-1417 is modified (phosphoserine). Residue Thr-1527 is modified to Phosphothreonine. Positions 1559-1590 are enriched in low complexity; it reads SRTGGANTAAAAASPTVGGSTSTQSNPSTSTP. 3 disordered regions span residues 1559 to 1596, 2181 to 2203, and 2283 to 2307; these read SRTG…VQII, INNG…ITTN, and TNEW…QTDD. Polar residues predominate over residues 2283 to 2293; the sequence is TNEWETCSRGS. Residues 2338–2373 adopt a coiled-coil conformation; that stretch reads KNDEVAELGEQKQSQLERHKELLKKNILRKRSLLER. The disordered stretch occupies residues 2382 to 2432; it reads DVKTKVQRHVRPLSNASPDEQSENERSGEPNLDFKRTEVQNPRHGAGRPKK. Phosphoserine occurs at positions 2395, 2398, and 2403. Residues 2404–2419 are compositionally biased toward basic and acidic residues; that stretch reads ENERSGEPNLDFKRTE. A PHD-type 2 zinc finger spans residues 2481–2546; sequence EFICIDCKRA…EYVCPECQRK (66 aa). The 105-residue stretch at 2556–2660 folds into the Bromo domain; sequence KLTSNDVEEL…SYFVQKIKNF (105 aa).

This sequence belongs to the BPTF family. In terms of assembly, component of the NURF complex composed of Caf1-55, E(bx), Nurf-38 and Iswi. Interacts with Trl. Interacts with histone H3-K4Me3.

It localises to the nucleus. Functionally, histone-binding component of NURF (nucleosome remodeling factor), a complex which catalyzes ATP-dependent nucleosome sliding and facilitates transcription of chromatin. Specifically recognizes H3 tails trimethylated on 'Lys-4' (H3K4me3), which mark transcription start sites of virtually all active genes. Required for homeotic gene expression, proper larval blood cell development, normal male X chromosome morphology, ecdysteroid signaling and metamorphosis. The polypeptide is Nucleosome-remodeling factor subunit NURF301 (E(bx)) (Drosophila melanogaster (Fruit fly)).